The chain runs to 147 residues: uncharacterized protein (147 aa).

The region spanning 1–137 (MRDNTIGSLI…LYELMTKVHK (137 aa)) is the HTH marR-type domain. Positions 53–76 (QMELAEKVTVTQGGISRMLTRLEK) form a DNA-binding region, H-T-H motif.

This is an uncharacterized protein from Bacillus cereus (strain ATCC 10987 / NRS 248).